A 128-amino-acid polypeptide reads, in one-letter code: Protein BEX2 (128 aa).

Arg-50 is subject to Omega-N-methylarginine. The disordered stretch occupies residues 107-128 (SLRAVSTDPPHHDHHDEFCLMP). The segment covering 115-128 (PPHHDHHDEFCLMP) has biased composition (basic and acidic residues). The his cluster stretch occupies residues 117–121 (HHDHH). Cys-125 provides a ligand contact to Zn(2+).

The protein belongs to the BEX family. Interacts with LMO2, possibly leading to regulate the transcriptional activity of a DNA-binding complex containing LMO2. Interacts with OMP. As to expression, expressed in central nervous system, with high level in pituitary, cerebellum and temporal lobe. Widely expressed in breast cancer cell lines.

It is found in the cytoplasm. Its subcellular location is the nucleus. Its function is as follows. Regulator of mitochondrial apoptosis and G1 cell cycle in breast cancer. Protects the breast cancer cells against mitochondrial apoptosis and this effect is mediated through the modulation of BCL2 protein family, which involves the positive regulation of anti-apoptotic member BCL2 and the negative regulation of pro-apoptotic members BAD, BAK1 and PUMA. Required for the normal cell cycle progression during G1 in breast cancer cells through the regulation of CCND1 and CDKN1A. Regulates the level of PP2A regulatory subunit B and PP2A phosphatase activity. In absence of reductive stress, acts as a pseudosubstrate for the CRL2(FEM1B) complex: associates with FEM1B via zinc, thereby preventing association between FEM1B and its substrates. The polypeptide is Protein BEX2 (BEX2) (Homo sapiens (Human)).